Here is a 187-residue protein sequence, read N- to C-terminus: Threonylcarbamoyl-AMP synthase (187 aa).

In terms of domain architecture, YrdC-like spans 4–187 (TLDLDRAVAA…DARSGQILRD (184 aa)).

It belongs to the SUA5 family. TsaC subfamily.

The protein localises to the cytoplasm. It carries out the reaction L-threonine + hydrogencarbonate + ATP = L-threonylcarbamoyladenylate + diphosphate + H2O. Its function is as follows. Required for the formation of a threonylcarbamoyl group on adenosine at position 37 (t(6)A37) in tRNAs that read codons beginning with adenine. Catalyzes the conversion of L-threonine, HCO(3)(-)/CO(2) and ATP to give threonylcarbamoyl-AMP (TC-AMP) as the acyladenylate intermediate, with the release of diphosphate. This chain is Threonylcarbamoyl-AMP synthase, found in Xanthomonas axonopodis pv. citri (strain 306).